The sequence spans 239 residues: Gamma-lactamase MBL2 (239 aa).

Positions 56, 58, 60, 61, 141, and 165 each coordinate Zn(2+).

Belongs to the metallo-beta-lactamase superfamily.

Its function is as follows. Gamma-lactamase; part of the Fusarium detoxification of benzoxazolinone cluster 2 (FDB2) involved in the degradation of benzoxazolinones produced by the host plant. Maize, wheat, and rye produce the 2 benzoxazinone phytoanticipins 2,4-dihy-droxy-7-methoxy-1,4-benzoxazin-3-one (DIMBOA) and 2,4-dihydroxy-1,4-benzoxazin-3-one (DIBOA) that, due to their inherent instability once released, spontaneously degrade to the more stable corresponding benzoxazolinones, 6-methoxy-2-benzoxazolinone (MBOA) and 2-benzoxazolinone (BOA), respectively. The first step in the detoxification of benzoxazolinones involves the hydrolysis of the cyclic ester bond of benzoxazolinones by the FDB1 cluster gamma-lactamase MBL1 to aminophenols. MBL1 is able to convert BOA into 2-aminophenol (2-AP), as well as MBOA into 5-methoxy-2-aminophenol (2-AMP). The FDB2 cluster N-malonyltransferase FDB2/NAT1 then metabolizes aminophenols via N-malonylation to non-toxic malonamic acids. FDB2/NAT1 converts 2-AP into N-(2-hydroxyphenyl) malonamic acid (HPMA) and 2-AMP into N-(2-hydroxy-4-methoxyphenyl) malonamic acid (HMPMA). The duplicated dienlactone hydrolases DLH1 and DLH2 may provide redundant function for hydrolyzing the lactone moiety in the BOA molecule. The roles of the amidases and other enzymes encoded by the 2 FDB clusters have not been identified so far. This is Gamma-lactamase MBL2 from Gibberella moniliformis (strain M3125 / FGSC 7600) (Maize ear and stalk rot fungus).